Here is a 107-residue protein sequence, read N- to C-terminus: Snaclec VP12 subunit A (107 aa).

Disulfide bonds link C4–C15 and C32–C107. The C-type lectin domain maps to 11–107; sequence YEGNCYKAFD…ECGLAYPFIC (97 aa).

The protein belongs to the snaclec family. As to quaternary structure, heterodimer of subunits alpha and beta; disulfide-linked. In terms of tissue distribution, expressed by the venom gland.

It is found in the secreted. Inhibits integrin alpha-2/beta-1- (ITGA2/ITGB1) dependent melanoma metastasis. This is Snaclec VP12 subunit A from Daboia palaestinae (Palestine viper).